A 75-amino-acid polypeptide reads, in one-letter code: Small ribosomal subunit protein bS18 (75 aa).

The protein belongs to the bacterial ribosomal protein bS18 family. As to quaternary structure, part of the 30S ribosomal subunit. Forms a tight heterodimer with protein bS6.

In terms of biological role, binds as a heterodimer with protein bS6 to the central domain of the 16S rRNA, where it helps stabilize the platform of the 30S subunit. This Buchnera aphidicola subsp. Schizaphis graminum (strain Sg) protein is Small ribosomal subunit protein bS18.